The sequence spans 544 residues: MPLFSKRKNNTDSKDKQNTDERNQEQQQEKERPVLISPSLAKNIAETKKEVGSSSDVIIREIKIGEQDHVHLAVIYISGLVDNNTIHESLIDPLVQDESIQNTHAIQQILEKTLPLGGVKAEKSWDKLFSELMLGNALIFADGHDEALICSTQGGEQRSIQEPSTQVSFRGPRQGFTESLQTNISMIRRYIKNPNLWVEKMKKGSVTNTDIALMYIQGICDEKVLKEVKQRLEKIDIDSILESGYIEQLIEDETFTTFPTMYHTERPDVVAGNLLEGRFAIIVDGTPFVLIAPALFVQFFQSVEDYYSRFDIATSIRILRVLVFFISLVAPAVYVAATTFHQEMIPTQLLVVIAAQREIVPFPAVVEALTMEVAFEILREAGVRLPRVVGSAVSIVGALVIGQAAVQAGIVSPAMVIIVALTAIASFATPAFAMAISARLIRFIFIIASAVMGFYGLILGIIMMFVHLCSLRSFGVPYMSPLAPFSSQGVKDALFRVPWWADEKRPESVSKEDKVRQGKDQRPEPAASRGMVNKDLEEGDQNGT.

Residues 1-36 (MPLFSKRKNNTDSKDKQNTDERNQEQQQEKERPVLI) are disordered. Positions 9-33 (NNTDSKDKQNTDERNQEQQQEKERP) are enriched in basic and acidic residues. 5 helical membrane passes run 279 to 299 (FAIIVDGTPFVLIAPALFVQF), 321 to 341 (VLVFFISLVAPAVYVAATTFH), 392 to 412 (AVSIVGALVIGQAAVQAGIVS), 416 to 436 (VIIVALTAIASFATPAFAMAI), and 443 to 463 (FIFIIASAVMGFYGLILGIIM). A compositionally biased stretch (basic and acidic residues) spans 504 to 523 (KRPESVSKEDKVRQGKDQRP). The tract at residues 504–544 (KRPESVSKEDKVRQGKDQRPEPAASRGMVNKDLEEGDQNGT) is disordered.

It belongs to the GerABKA family.

It is found in the cell membrane. Functionally, involved in the germination response to the combination of glucose, fructose, L-asparagine, and KCl. This is Spore germination protein KA (gerKA) from Bacillus subtilis (strain 168).